The chain runs to 73 residues: MKKNIHPDYKLVIASCSCGNVIEVNSTLGCNINLDVCSNCHPAYTNKKREAATGGRVDRFKKRFSFLESSKAE.

4 residues coordinate Zn(2+): Cys-16, Cys-18, Cys-37, and Cys-40.

It belongs to the bacterial ribosomal protein bL31 family. Type A subfamily. In terms of assembly, part of the 50S ribosomal subunit. The cofactor is Zn(2+).

Binds the 23S rRNA. In Hamiltonella defensa subsp. Acyrthosiphon pisum (strain 5AT), this protein is Large ribosomal subunit protein bL31.